A 459-amino-acid chain; its full sequence is Transcriptional coactivator YAP1 (459 aa).

Phosphoserine; by LATS1 and LATS2 is present on residues Ser-21, Ser-69, Ser-87, and Ser-119. Disordered regions lie at residues 51-88 (LPDS…AHSS) and 103-129 (SGMA…VPLP). WW domains follow at residues 126–159 (VPLP…DPRK) and 186–219 (GPLP…DPRL). Disordered regions lie at residues 231–254 (TQSA…MGGN) and 307–364 (PTSM…SSYS). A transactivation domain region spans residues 247-459 (HGGVMGGNNQ…IDKESFLTWL (213 aa)). 2 stretches are compositionally biased toward polar residues: residues 307 to 347 (PTSM…SGTY) and 355 to 364 (DSGLSMSSYS).

This sequence belongs to the YAP1 family. Post-translationally, phosphorylated by lats1 and lats2; leading to cytoplasmic translocation and inactivation. Ubiquitously expressed throughout development.

It localises to the cytoplasm. Its subcellular location is the nucleus. It is found in the cell junction. The protein resides in the tight junction. The protein localises to the cell membrane. Its function is as follows. Transcriptional regulator which can act both as a coactivator and a corepressor and is the critical downstream regulatory target in the Hippo signaling pathway that plays a pivotal role in organ size control and tumor suppression by restricting proliferation and promoting apoptosis. Plays a key role in tissue tension and 3D tissue shape by regulating cortical actomyosin network formation. The chain is Transcriptional coactivator YAP1 from Oryzias latipes (Japanese rice fish).